A 674-amino-acid chain; its full sequence is DNA ligase (674 aa).

Residues 34-38 (DSEYD), 83-84 (SL), and Glu-114 each bind NAD(+). Catalysis depends on Lys-116, which acts as the N6-AMP-lysine intermediate. The NAD(+) site is built by Arg-137, Glu-174, Lys-290, and Lys-314. Zn(2+) is bound by residues Cys-405, Cys-408, Cys-424, and Cys-429. Positions 587–674 (QSGTQFDGKM…KLSLIENTKF (88 aa)) constitute a BRCT domain.

The protein belongs to the NAD-dependent DNA ligase family. LigA subfamily. It depends on Mg(2+) as a cofactor. The cofactor is Mn(2+).

The enzyme catalyses NAD(+) + (deoxyribonucleotide)n-3'-hydroxyl + 5'-phospho-(deoxyribonucleotide)m = (deoxyribonucleotide)n+m + AMP + beta-nicotinamide D-nucleotide.. In terms of biological role, DNA ligase that catalyzes the formation of phosphodiester linkages between 5'-phosphoryl and 3'-hydroxyl groups in double-stranded DNA using NAD as a coenzyme and as the energy source for the reaction. It is essential for DNA replication and repair of damaged DNA. The protein is DNA ligase of Endomicrobium trichonymphae.